The primary structure comprises 368 residues: MSKPRTRVAVIFGGRSNEHSVSCVSAGSVLRNLDPERYEVVPIGITTEGSWVLGSTDPETLSIRGRALPSVDADGSALALTADPTRSGDLVALDDGEAGKILASVDVVFPVLHGAYGEDGTIQGLLELAGVPYVGPGVLASAAGMDKEFTKKLLAAEGLPIGFQVVLRPGTATLTDEQKSRLHLPVFVKPARGGSSIGITRVAEWAALDDAIAHARLHDPKVIVESGIIGREVECGVLEFPDGDVRASVIAEIRMPEGAGDDEAFYDFDSKYLDDVCEFDVPAKLDESVSDEIRELAVRAFSALDCQGLARVDFFVTEDGPVINEINTMPGFTSISMYPRMWGAVGVDYGTLVSTLVDTALARGIGLR.

The ATP-grasp domain maps to 151–358 (KKLLAAEGLP…YGTLVSTLVD (208 aa)). 179–234 (KSRLHLPVFVKPARGGSSIGITRVAEWAALDDAIAHARLHDPKVIVESGIIGREVE) is an ATP binding site. D313, E325, and N327 together coordinate Mg(2+).

Belongs to the D-alanine--D-alanine ligase family. The cofactor is Mg(2+). It depends on Mn(2+) as a cofactor.

The protein localises to the cytoplasm. The catalysed reaction is 2 D-alanine + ATP = D-alanyl-D-alanine + ADP + phosphate + H(+). The protein operates within cell wall biogenesis; peptidoglycan biosynthesis. Functionally, cell wall formation. This Rhodococcus jostii (strain RHA1) protein is D-alanine--D-alanine ligase.